A 452-amino-acid chain; its full sequence is tRNA modification GTPase MnmE (452 aa).

Residues Arg-21, Glu-78, and Lys-118 each coordinate (6S)-5-formyl-5,6,7,8-tetrahydrofolate. In terms of domain architecture, TrmE-type G spans 214–375 (GMKVVIAGRP…LREHLKQSMG (162 aa)). A K(+)-binding site is contributed by Asn-224. Residues 224-229 (NAGKSS), 243-249 (TDIAGTT), 268-271 (DTAG), and 333-336 (NKAD) contribute to the GTP site. Ser-228 serves as a coordination point for Mg(2+). K(+) is bound by residues Thr-243, Ile-245, and Thr-248. Residue Thr-249 coordinates Mg(2+). Lys-452 serves as a coordination point for (6S)-5-formyl-5,6,7,8-tetrahydrofolate.

The protein belongs to the TRAFAC class TrmE-Era-EngA-EngB-Septin-like GTPase superfamily. TrmE GTPase family. As to quaternary structure, homodimer. Heterotetramer of two MnmE and two MnmG subunits. It depends on K(+) as a cofactor.

The protein localises to the cytoplasm. Its function is as follows. Exhibits a very high intrinsic GTPase hydrolysis rate. Involved in the addition of a carboxymethylaminomethyl (cmnm) group at the wobble position (U34) of certain tRNAs, forming tRNA-cmnm(5)s(2)U34. The chain is tRNA modification GTPase MnmE from Pasteurella multocida (strain Pm70).